The following is a 570-amino-acid chain: Aspartyl aminopeptidase (570 aa).

His-86 is a Zn(2+) binding site. His-160 contributes to the substrate binding site. Asp-324 lines the Zn(2+) pocket. Glu-379 contributes to the substrate binding site. 2 residues coordinate Zn(2+): Glu-380 and Asp-434. Positions 434, 437, 462, and 469 each coordinate substrate. His-534 contacts Zn(2+).

The protein belongs to the peptidase M18 family. In terms of assembly, homododecamer composed of homodimers and homotrimers that assemble into a tetrahedron shape to create a central tunnel containing the active sites. Homooctamer. Zn(2+) is required as a cofactor.

The protein localises to the cytoplasm. It catalyses the reaction Release of an N-terminal aspartate or glutamate from a peptide, with a preference for aspartate.. Its activity is regulated as follows. Activated by Co(2+). Inhibited by high concentrations (&gt;1mM) of Zn(2+). Aminopeptidase which specifically catalyzes the removal of glutamic acid or aspartic acid residues from the N-terminus of peptides. May play a role in the final step of host hemoglobin catabolism, by cleaving hemoglobin-derived oligopeptides in the cytoplasm. This is Aspartyl aminopeptidase from Plasmodium falciparum (isolate 3D7).